The chain runs to 659 residues: UvrABC system protein B (659 aa).

The Helicase ATP-binding domain maps to 25-182; the sequence is QSIENGNRGQ…KKLIEIQYER (158 aa). 38-45 serves as a coordination point for ATP; sequence GVTGSGKT. A Beta-hairpin motif is present at residues 91–114; it reads YYDYYQPEAYVPQTDTFIEKDASI. Residues 429–582 enclose the Helicase C-terminal domain; the sequence is QIDDLYGEIQ…QMEYNEEHNI (154 aa). One can recognise a UVR domain in the interval 622–657; the sequence is EKLIEQYEEEMKEAAKNLQFERAAELRDIIKDLKEN.

Belongs to the UvrB family. As to quaternary structure, forms a heterotetramer with UvrA during the search for lesions. Interacts with UvrC in an incision complex.

The protein localises to the cytoplasm. Functionally, the UvrABC repair system catalyzes the recognition and processing of DNA lesions. A damage recognition complex composed of 2 UvrA and 2 UvrB subunits scans DNA for abnormalities. Upon binding of the UvrA(2)B(2) complex to a putative damaged site, the DNA wraps around one UvrB monomer. DNA wrap is dependent on ATP binding by UvrB and probably causes local melting of the DNA helix, facilitating insertion of UvrB beta-hairpin between the DNA strands. Then UvrB probes one DNA strand for the presence of a lesion. If a lesion is found the UvrA subunits dissociate and the UvrB-DNA preincision complex is formed. This complex is subsequently bound by UvrC and the second UvrB is released. If no lesion is found, the DNA wraps around the other UvrB subunit that will check the other stand for damage. In Clostridium perfringens (strain SM101 / Type A), this protein is UvrABC system protein B.